Reading from the N-terminus, the 365-residue chain is MKKYTKYLPLLLIIPFLAACGSSSPKKSKRTKTRVDYNTKDTNGLDILTGQFSHNIDDIWGSNELLVASKKDYVKYTDKFYTRSHISFEDGQITIETLGDQNHLRNSIIHTLLMGSDPKGIDLFASGDAPISSNPFLAGQVNDQFGRDINNIAIANDFATYLIQNKLQTRRLQNGRTVTYVAIKMVAGHIEVRARQYLPLVRKMAKRYGIEPSLILGIMEVESAFNPYAVSYANAIGLMQVVPRTAGRDIFARKGFDGQPDRAYLYNPSQNIDSGTLYLAILRDEYLEGITNPTAKRYAMISAYNSGAGAVLKVFDYDKYDAIDRINELSPDAVYRILTTAHPSSQARNYLKKVSKAREKYLHIR.

An N-terminal signal peptide occupies residues 1 to 19 (MKKYTKYLPLLLIIPFLAA). Cys20 carries the N-palmitoyl cysteine lipid modification. Cys20 carries S-diacylglycerol cysteine lipidation.

Belongs to the transglycosylase Slt family.

It localises to the cell outer membrane. It carries out the reaction Exolytic cleavage of the (1-&gt;4)-beta-glycosidic linkage between N-acetylmuramic acid (MurNAc) and N-acetylglucosamine (GlcNAc) residues in peptidoglycan, from either the reducing or the non-reducing ends of the peptidoglycan chains, with concomitant formation of a 1,6-anhydrobond in the MurNAc residue.. Murein-degrading enzyme. May play a role in recycling of muropeptides during cell elongation and/or cell division. This Actinobacillus pleuropneumoniae serotype 5b (strain L20) protein is Membrane-bound lytic murein transglycosylase C.